We begin with the raw amino-acid sequence, 72 residues long: Translation initiation factor IF-1 (72 aa).

The region spanning 1–72 is the S1-like domain; that stretch reads MAKDDVIVVD…DKGRITHRYK (72 aa).

This sequence belongs to the IF-1 family. Component of the 30S ribosomal translation pre-initiation complex which assembles on the 30S ribosome in the order IF-2 and IF-3, IF-1 and N-formylmethionyl-tRNA(fMet); mRNA recruitment can occur at any time during PIC assembly.

It localises to the cytoplasm. One of the essential components for the initiation of protein synthesis. Stabilizes the binding of IF-2 and IF-3 on the 30S subunit to which N-formylmethionyl-tRNA(fMet) subsequently binds. Helps modulate mRNA selection, yielding the 30S pre-initiation complex (PIC). Upon addition of the 50S ribosomal subunit IF-1, IF-2 and IF-3 are released leaving the mature 70S translation initiation complex. This is Translation initiation factor IF-1 from Aliarcobacter butzleri (strain RM4018) (Arcobacter butzleri).